The following is a 316-amino-acid chain: Phosphoglycerate mutase-like protein AT74 (316 aa).

Catalysis depends on H17, which acts as the Tele-phosphohistidine intermediate. E106 (proton donor/acceptor) is an active-site residue. Positions 275–316 are disordered; sequence KECETEATEDREEEEEEEGKRVNLLTSSEYSNEPELYNGQCC. Positions 279 to 291 are enriched in acidic residues; sequence TEATEDREEEEEE.

The protein belongs to the phosphoglycerate mutase family. As to expression, expressed in roots, leaves, stems, flowers and siliques.

Phosphoglycerate mutase-like protein lacking PGM activity. May play a role in carbohydrates metabolism. In Arabidopsis thaliana (Mouse-ear cress), this protein is Phosphoglycerate mutase-like protein AT74.